The chain runs to 298 residues: Protoheme IX farnesyltransferase (298 aa).

9 consecutive transmembrane segments (helical) span residues 26 to 46, 52 to 72, 98 to 118, 120 to 140, 148 to 168, 174 to 194, 214 to 234, 241 to 261, and 278 to 298; these read VVGHIVFTAIIGMFLAVPGVP, FWASLGIGFAAASAAALNHFL, VVGFALVLGIVAMAILIAFVN, LTAFLTFLSLIGYAVIYTVYL, IVIGGAAGAAPPVLGWCAVTG, ALLLFLLIFVWTPPHFWAYAI, IAFTQLHILLYTILLFLAGLM, SGEIYLAAALIFGGIFVYYAI, and YSLVYLVGIFSALLVDHYIVL.

Belongs to the UbiA prenyltransferase family. Protoheme IX farnesyltransferase subfamily.

The protein localises to the cell inner membrane. The enzyme catalyses heme b + (2E,6E)-farnesyl diphosphate + H2O = Fe(II)-heme o + diphosphate. It functions in the pathway porphyrin-containing compound metabolism; heme O biosynthesis; heme O from protoheme: step 1/1. Functionally, converts heme B (protoheme IX) to heme O by substitution of the vinyl group on carbon 2 of heme B porphyrin ring with a hydroxyethyl farnesyl side group. In Methylococcus capsulatus (strain ATCC 33009 / NCIMB 11132 / Bath), this protein is Protoheme IX farnesyltransferase.